A 510-amino-acid chain; its full sequence is Beta-glucosidase 26 (510 aa).

Positions 1-27 (MRKFIAALRLALAAAAHLLLTLPPAQC) are cleaved as a signal peptide. Gln59 contacts a beta-D-glucoside. N-linked (GlcNAc...) asparagine glycosylation is found at Asn87 and Asn127. Residues His160 and 205-206 (NE) each bind a beta-D-glucoside. The active-site Proton donor is the Glu206. Cys225 and Cys228 are disulfide-bonded. Asn233 is a glycosylation site (N-linked (GlcNAc...) asparagine). A beta-D-glucoside contacts are provided by Tyr345 and Glu416. The active-site Nucleophile is the Glu416. Asn424 carries an N-linked (GlcNAc...) asparagine glycan. A beta-D-glucoside contacts are provided by residues Trp463, 470–471 (EW), and Phe479.

It belongs to the glycosyl hydrolase 1 family.

It catalyses the reaction Hydrolysis of terminal, non-reducing beta-D-glucosyl residues with release of beta-D-glucose.. Hydrolyzes p-nitrophenyl beta-D-glucoside, p-nitrophenyl beta-D-mannoside, p-nitrophenyl beta-D-galactoside, p-nitrophenyl beta-D-xyloside, p-nitrophenyl beta-D-fucoside, p-nitrophenyl beta-L-arabinoside, cello-oligosaccharides, laminari-oligosaccharides and sophorose. This chain is Beta-glucosidase 26 (BGLU26), found in Oryza sativa subsp. japonica (Rice).